The sequence spans 376 residues: MTEQKKINLLDLNREGMRELFASFGEKPFRSDQVMKWIYHFGVDNFDDMSNVNKKLKEKLKAECEIVAPEISVRQQAKDGTIKYALVLEGGQEVEAVWIPEKERATLCVSSQVGCALECTFCSTAQQGFNRNLKVSEIIGQVWRVAKDIGLDGHSEKRPVTNVVMMGMGEPLLNVKNVVPAMELMLDDWGFGLSKRRVTLSTSGVVPALDLLKEKIDVALAISLHAPDNALRDILVPVNKKYPIEEFLAACRRYIDGSKANKDVTVEYVMLNGINDSTDQAHALVQTLKGTPCKVNLIPFNPFPGNEYTRSSNSRIDRFSKVLQAAGITCIVRRPRGDDIDAACGQLAGDVVDRTKRLAKKKMRDDNAIAVNIHQA.

Glu95 (proton acceptor) is an active-site residue. A Radical SAM core domain is found at 101–339 (EKERATLCVS…CIVRRPRGDD (239 aa)). The cysteines at positions 108 and 344 are disulfide-linked. The [4Fe-4S] cluster site is built by Cys115, Cys119, and Cys122. S-adenosyl-L-methionine is bound by residues 169–170 (GE), Ser201, 223–225 (SLH), and Asn301. Cys344 acts as the S-methylcysteine intermediate in catalysis.

Belongs to the radical SAM superfamily. RlmN family. The cofactor is [4Fe-4S] cluster.

The protein localises to the cytoplasm. It catalyses the reaction adenosine(2503) in 23S rRNA + 2 reduced [2Fe-2S]-[ferredoxin] + 2 S-adenosyl-L-methionine = 2-methyladenosine(2503) in 23S rRNA + 5'-deoxyadenosine + L-methionine + 2 oxidized [2Fe-2S]-[ferredoxin] + S-adenosyl-L-homocysteine. It carries out the reaction adenosine(37) in tRNA + 2 reduced [2Fe-2S]-[ferredoxin] + 2 S-adenosyl-L-methionine = 2-methyladenosine(37) in tRNA + 5'-deoxyadenosine + L-methionine + 2 oxidized [2Fe-2S]-[ferredoxin] + S-adenosyl-L-homocysteine. In terms of biological role, specifically methylates position 2 of adenine 2503 in 23S rRNA and position 2 of adenine 37 in tRNAs. m2A2503 modification seems to play a crucial role in the proofreading step occurring at the peptidyl transferase center and thus would serve to optimize ribosomal fidelity. This Pseudoalteromonas translucida (strain TAC 125) protein is Dual-specificity RNA methyltransferase RlmN.